A 524-amino-acid chain; its full sequence is MNNYPWLTIITLFPISAGLLIPLIPNRGNNLIRWYALGICLIDFLLMTYVFGSQFDFYGQGIQLKEDISWINVIDFHWRVGVDGLSIALVLLTGFITTLATLAAWPVTRNPRLFYFLMLAMYSGQLGLFLAQDLLLFFFMWELELIPVYLLLSMWGGRRRLYAATKFILYTAGGSIFLLAAILTISLWGPNGPILDMETLSKQSYPLGLEILVYLGFLIAYAVKLPVFPFHTWLPDTHGEAHYSTCMLLAGILLKMGGYGFIRINIEMLSDAHRIFAPWLVALGAGQIVYAALVSIAQKNLKRRIAYSSVSHMGFVLIGAGSFSDLGLSGAILQMISHGLIGAGLFFLAGTTYDRSRTLILDDMGGWGSPLPKTFSTFTACAMASLALPGMSGFVAELMIFLGIVASSVYSPLFKAIITCVEGIGIILTPIYLLSMVRKMFYGYNDISLKTLKDSLILDASPREVFIILSLLVPMLGIGFYPDLTLQLWNQKAQEIVSLPSGNEKSLTLISYSYPVEKNFSLHH.

14 helical membrane passes run 4–24 (YPWL…IPLI), 31–51 (LIRW…TYVF), 87–107 (IALV…AWPV), 113–133 (LFYF…LAQD), 134–154 (LLLF…LLSM), 167–187 (FILY…TISL), 211–231 (ILVY…FPFH), 242–262 (HYST…YGFI), 275–295 (IFAP…ALVS), 308–328 (SSVS…DLGL), 330–350 (GAIL…FLAG), 386–406 (LALP…GIVA), 417–437 (IITC…LSMV), and 465–485 (VFII…PDLT).

Belongs to the complex I subunit 4 family.

It is found in the plastid. The protein resides in the chloroplast thylakoid membrane. The enzyme catalyses a plastoquinone + NADH + (n+1) H(+)(in) = a plastoquinol + NAD(+) + n H(+)(out). It carries out the reaction a plastoquinone + NADPH + (n+1) H(+)(in) = a plastoquinol + NADP(+) + n H(+)(out). The polypeptide is NAD(P)H-quinone oxidoreductase chain 4, chloroplastic (Staurastrum punctulatum (Green alga)).